The following is a 154-amino-acid chain: Myoglobin (154 aa).

In terms of domain architecture, Globin spans 2–148 (GLSDGEWQLV…FRKDMASNYK (147 aa)). A Phosphoserine modification is found at S4. H65 is a nitrite binding site. Residue H65 coordinates O2. T68 is subject to Phosphothreonine. H94 is a heme b binding site.

This sequence belongs to the globin family. As to quaternary structure, monomeric.

It is found in the cytoplasm. Its subcellular location is the sarcoplasm. It carries out the reaction Fe(III)-heme b-[protein] + nitric oxide + H2O = Fe(II)-heme b-[protein] + nitrite + 2 H(+). The enzyme catalyses H2O2 + AH2 = A + 2 H2O. Monomeric heme protein which primary function is to store oxygen and facilitate its diffusion within muscle tissues. Reversibly binds oxygen through a pentacoordinated heme iron and enables its timely and efficient release as needed during periods of heightened demand. Depending on the oxidative conditions of tissues and cells, and in addition to its ability to bind oxygen, it also has a nitrite reductase activity whereby it regulates the production of bioactive nitric oxide. Under stress conditions, like hypoxia and anoxia, it also protects cells against reactive oxygen species thanks to its pseudoperoxidase activity. This is Myoglobin (MB) from Pongo pygmaeus (Bornean orangutan).